A 364-amino-acid polypeptide reads, in one-letter code: uncharacterized protein (364 aa).

Positions 1–17 (MEPGELMEVDTSQELDE) are enriched in acidic residues. The segment at 1–61 (MEPGELMEVD…EEDQSSTETM (61 aa)) is disordered. The span at 19–31 (TSAKETDQPKDAQ) shows a compositional bias: basic and acidic residues.

This is an uncharacterized protein from Caenorhabditis elegans.